Here is a 92-residue protein sequence, read N- to C-terminus: Small ribosomal subunit protein bS16 (92 aa).

Belongs to the bacterial ribosomal protein bS16 family.

The protein is Small ribosomal subunit protein bS16 of Desulforudis audaxviator (strain MP104C).